The sequence spans 508 residues: Polyamine oxidase FMS1 (508 aa).

This sequence belongs to the flavin monoamine oxidase family. It depends on FAD as a cofactor.

It carries out the reaction spermine + O2 + H2O = 3-aminopropanal + spermidine + H2O2. The enzyme catalyses spermidine + O2 + H2O = 3-aminopropanal + putrescine + H2O2. The catalysed reaction is N(1)-acetylspermine + O2 + H2O = 3-acetamidopropanal + spermidine + H2O2. It catalyses the reaction N(1)-acetylspermidine + O2 + H2O = 3-acetamidopropanal + putrescine + H2O2. It carries out the reaction N(8)-acetylspermidine + O2 + H2O = 4-acetamidobutanal + propane-1,3-diamine + H2O2. Its function is as follows. Involved in the production of beta-alanine, a precursor of pantothenic acid. Multicopy suppressor of fenpropimorph resistance. The protein is Polyamine oxidase FMS1 (FMS1) of Saccharomyces cerevisiae (strain ATCC 204508 / S288c) (Baker's yeast).